Consider the following 225-residue polypeptide: Peptidyl-tRNA hydrolase (225 aa).

TRNA is bound at residue Tyr-14. Catalysis depends on His-19, which acts as the Proton acceptor. TRNA contacts are provided by Phe-64, Asn-66, and Asn-112. A disordered region spans residues 184-225 (ALRMQPPKPEKPKPAAKAPEAQAPEAAPDERSALQKLADRFR). Residues 198 to 209 (AAKAPEAQAPEA) show a composition bias toward low complexity. Residues 211–225 (PDERSALQKLADRFR) show a composition bias toward basic and acidic residues.

Belongs to the PTH family. As to quaternary structure, monomer.

It localises to the cytoplasm. The enzyme catalyses an N-acyl-L-alpha-aminoacyl-tRNA + H2O = an N-acyl-L-amino acid + a tRNA + H(+). Hydrolyzes ribosome-free peptidyl-tRNAs (with 1 or more amino acids incorporated), which drop off the ribosome during protein synthesis, or as a result of ribosome stalling. In terms of biological role, catalyzes the release of premature peptidyl moieties from peptidyl-tRNA molecules trapped in stalled 50S ribosomal subunits, and thus maintains levels of free tRNAs and 50S ribosomes. In Cereibacter sphaeroides (strain ATCC 17023 / DSM 158 / JCM 6121 / CCUG 31486 / LMG 2827 / NBRC 12203 / NCIMB 8253 / ATH 2.4.1.) (Rhodobacter sphaeroides), this protein is Peptidyl-tRNA hydrolase.